We begin with the raw amino-acid sequence, 480 residues long: EGF-like repeat and discoidin I-like domain-containing protein 3 (480 aa).

Positions 1–23 (MKHLVAAWLLVGLSLGVPQFGKG) are cleaved as a signal peptide. In terms of domain architecture, EGF-like 1 spans 24–60 (DICNPNPCENGGICLSGLADDSFSCECPEGFAGPNCS). 3 disulfides stabilise this stretch: cysteine 26–cysteine 37, cysteine 31–cysteine 48, and cysteine 50–cysteine 59. Residue threonine 73 is glycosylated (O-linked (GalNAc...) threonine). EGF-like domains lie at 74–117 (SAGP…IHCQ) and 119–155 (NINE…RNCQ). 3 disulfide bridges follow: cysteine 78–cysteine 89, cysteine 83–cysteine 105, and cysteine 107–cysteine 116. Threonine 88 carries an O-linked (Fuc...) threonine glycan. The Cell attachment site motif lies at 96-98 (RGD). Residues asparagine 119, isoleucine 120, and glutamate 122 each contribute to the Ca(2+) site. Disulfide bonds link cysteine 123/cysteine 134, cysteine 128/cysteine 143, cysteine 145/cysteine 154, cysteine 158/cysteine 314, cysteine 301/cysteine 305, and cysteine 319/cysteine 476. Residues aspartate 136 and leucine 137 each contribute to the Ca(2+) site. A glycan (N-linked (GlcNAc...) asparagine) is linked at asparagine 140. 2 consecutive F5/8 type C domains span residues 158–314 (CSGP…LLGC) and 319–476 (CSEP…LLGC).

Expressed in angioblasts and early endothelial cells. By embryonic day 13.5, also expressed in a restricted group of non-endothelial cells including chondrocytes and retinal neurons.

The protein localises to the secreted. Its function is as follows. Promotes adhesion of endothelial cells through interaction with the alpha-v/beta-3 integrin receptor. Inhibits formation of vascular-like structures. May be involved in regulation of vascular morphogenesis of remodeling in embryonic development. The chain is EGF-like repeat and discoidin I-like domain-containing protein 3 (Edil3) from Mus musculus (Mouse).